The primary structure comprises 337 residues: Palmitoyltransferase ZDHHC15 (337 aa).

Topologically, residues 1–20 (MRRGWKMALSGGLRCCRRVL) are cytoplasmic. Residues 21-41 (SWVPVLVIVLVVLWSYYAYVF) form a helical membrane-spanning segment. At 42-56 (ELCLVTVLSPAEKVI) the chain is on the lumenal side. The chain crosses the membrane as a helical span at residues 57–77 (YLILYHAIFVFFTWTYWKSIF). Residues 78–172 (TLPQQPNQKF…NNCIGFSNYK (95 aa)) are Cytoplasmic-facing. Residues 129-179 (RFCDRCHLIKPDRCHHCSVCAMCVLKMDHHCPWVNNCIGFSNYKFFLQFLA) enclose the DHHC domain. The Zn(2+) site is built by cysteine 131, cysteine 134, histidine 144, cysteine 145, cysteine 148, cysteine 151, and histidine 158. Residue cysteine 159 is the S-palmitoyl cysteine intermediate of the active site. Cysteine 165 provides a ligand contact to Zn(2+). The chain crosses the membrane as a helical span at residues 173–193 (FFLQFLAYSVLYCLYIATTVF). The Lumenal portion of the chain corresponds to 194–210 (SYFIKYWRGELPSVRSK). The helical transmembrane segment at 211-234 (FHVLFLLFVACMFFVSLVILFGYH) threads the bilayer. Over 235–337 (CWLVSRNKTT…SSSLAVETET (103 aa)) the chain is Cytoplasmic. A disordered region spans residues 306–337 (PLLANEETWEDNEDDNQDYPEGSSSLAVETET). Residues 312-323 (ETWEDNEDDNQD) are compositionally biased toward acidic residues. Over residues 327–337 (GSSSLAVETET) the composition is skewed to polar residues.

It belongs to the DHHC palmitoyltransferase family. In terms of processing, autopalmitoylated (in vitro). As to expression, expressed in placenta, liver, lung, kidney, heart and brain.

The protein localises to the golgi apparatus membrane. The protein resides in the postsynaptic density. It catalyses the reaction L-cysteinyl-[protein] + hexadecanoyl-CoA = S-hexadecanoyl-L-cysteinyl-[protein] + CoA. It carries out the reaction L-cysteinyl-[protein] + tetradecanoyl-CoA = S-tetradecanoyl-L-cysteinyl-[protein] + CoA. The catalysed reaction is L-cysteinyl-[protein] + octadecanoyl-CoA = S-octadecanoyl-L-cysteinyl-[protein] + CoA. Palmitoyltransferase that catalyzes the addition of palmitate onto various protein substrates. Has no stringent fatty acid selectivity and in addition to palmitate can also transfer onto target proteins myristate from tetradecanoyl-CoA and stearate from octadecanoyl-CoA. Palmitoylates IGF2R and SORT1, promoting their partitioning to an endosomal membrane subdomain where they can interact with the retromer cargo-selective complex. Thereby, regulates retrograde transport from endosomes to the Golgi apparatus of these lysosomal sorting receptors and plays a role in trafficking of lysosomal proteins. In the nervous system, catalyzes the palmitoylation of DLG4/PSD95 and regulates its synaptic clustering and function in synaptogenesis. Could be involved in the differentiation of dopaminergic neurons and the development of the diencephalon. Could also catalyze the palmitoylation of GAP43. Could also palmitoylate DNAJC5 and regulate its localization to the Golgi membrane. Could also palmitoylate FYN as shown in vitro. May palmitoylate CALHM3 subunit of gustatory voltage-gated ion channels and modulate channel gating and kinetics. The protein is Palmitoyltransferase ZDHHC15 of Homo sapiens (Human).